The sequence spans 249 residues: Ubiquinone/menaquinone biosynthesis C-methyltransferase UbiE (249 aa).

S-adenosyl-L-methionine-binding positions include Thr-74, Asp-93, and 121–122; that span reads DA.

The protein belongs to the class I-like SAM-binding methyltransferase superfamily. MenG/UbiE family.

The catalysed reaction is a 2-demethylmenaquinol + S-adenosyl-L-methionine = a menaquinol + S-adenosyl-L-homocysteine + H(+). It carries out the reaction a 2-methoxy-6-(all-trans-polyprenyl)benzene-1,4-diol + S-adenosyl-L-methionine = a 5-methoxy-2-methyl-3-(all-trans-polyprenyl)benzene-1,4-diol + S-adenosyl-L-homocysteine + H(+). It participates in quinol/quinone metabolism; menaquinone biosynthesis; menaquinol from 1,4-dihydroxy-2-naphthoate: step 2/2. Its pathway is cofactor biosynthesis; ubiquinone biosynthesis. Methyltransferase required for the conversion of demethylmenaquinol (DMKH2) to menaquinol (MKH2) and the conversion of 2-polyprenyl-6-methoxy-1,4-benzoquinol (DDMQH2) to 2-polyprenyl-3-methyl-6-methoxy-1,4-benzoquinol (DMQH2). This chain is Ubiquinone/menaquinone biosynthesis C-methyltransferase UbiE, found in Acidiphilium cryptum (strain JF-5).